The chain runs to 380 residues: Cell division protein ZipA (380 aa).

Residues 1 to 7 (MEDNFRN) are Periplasmic-facing. A helical transmembrane segment spans residues 8-28 (VLIILSAIVITAIFIHGLWTL). Over 29-380 (RKQKNPYKLK…DRKSRIALVE (352 aa)) the chain is Cytoplasmic.

Belongs to the ZipA family. As to quaternary structure, interacts with FtsZ via their C-terminal domains.

It localises to the cell inner membrane. In terms of biological role, essential cell division protein that stabilizes the FtsZ protofilaments by cross-linking them and that serves as a cytoplasmic membrane anchor for the Z ring. Also required for the recruitment to the septal ring of downstream cell division proteins. The polypeptide is Cell division protein ZipA (Colwellia psychrerythraea (strain 34H / ATCC BAA-681) (Vibrio psychroerythus)).